A 343-amino-acid chain; its full sequence is MSKIFVDACFGKETPYTPVWMMRQAGRYLPEYMRVRAEAGNFLNLCHDPKKACEVTLQPVDIVGVDAAILFSDILVVPLEMGMDLKFVTGEGPKFDDPIKNEADLDRLFGGDEAASKLTYVYDTIKLIKEQLAEDKALIGFTGAPWTLATYMIEGEGTKTYNICKKMMYSNPKLLHKILSKVTEVVKFYMEKQIEAGIDVVQIFDSWAAAIEPSKYDEFSWKYMVEIADYLKAKYPHIPIIMFPKGIPAFLDKVYGNFEVFGVDWSTPMDLAKEKLGERYVLQGNMEPCRLYSKEETTESVESIQKIMGGKRHIFNLGHGILPDVPVENAKHFIKECHRVSKK.

Substrate is bound by residues 23-27 (RQAGR), aspartate 73, tyrosine 151, serine 206, and histidine 319.

Belongs to the uroporphyrinogen decarboxylase family. In terms of assembly, homodimer.

Its subcellular location is the cytoplasm. It carries out the reaction uroporphyrinogen III + 4 H(+) = coproporphyrinogen III + 4 CO2. It functions in the pathway porphyrin-containing compound metabolism; protoporphyrin-IX biosynthesis; coproporphyrinogen-III from 5-aminolevulinate: step 4/4. In terms of biological role, catalyzes the decarboxylation of four acetate groups of uroporphyrinogen-III to yield coproporphyrinogen-III. The chain is Uroporphyrinogen decarboxylase from Sulfurimonas denitrificans (strain ATCC 33889 / DSM 1251) (Thiomicrospira denitrificans (strain ATCC 33889 / DSM 1251)).